We begin with the raw amino-acid sequence, 202 residues long: LexA repressor (202 aa).

A DNA-binding region (H-T-H motif) is located at residues 27-47 (RAEIAAELGFRSANAAEEHLR). Active-site for autocatalytic cleavage activity residues include serine 119 and lysine 156.

Belongs to the peptidase S24 family. As to quaternary structure, homodimer.

It carries out the reaction Hydrolysis of Ala-|-Gly bond in repressor LexA.. Its function is as follows. Represses a number of genes involved in the response to DNA damage (SOS response), including recA and lexA. In the presence of single-stranded DNA, RecA interacts with LexA causing an autocatalytic cleavage which disrupts the DNA-binding part of LexA, leading to derepression of the SOS regulon and eventually DNA repair. The protein is LexA repressor of Marinobacter nauticus (strain ATCC 700491 / DSM 11845 / VT8) (Marinobacter aquaeolei).